Reading from the N-terminus, the 455-residue chain is MKFKLFLLVFFVFLLPYLSQSCENTFSCPTLNQTCTGQCSAGLVCNQTLSSCQEYEKCDSSLPLAEDTCSQDGYICVSNVCLPFIGTQYPSSQCKQNSNCLMSLCAGNICMVMPGSQCQTNSQCSPDQFCSTTFIGTTSTSPSTMTLPMTMTLPMTMTLPITMTMGSSSVCTNRLQLNSQCSTSDSCQTGLACINSVCSPIFSGAENATCFPGAIEPTKAACDVGLSCLNGANGYSCKSYVENQSCDPSDEYPVCNSDYQSCKCNSKGKGSCQSYYKLTQECKDSSNKLVLCAKSKNSIPSYKDYVTQINCQSQLCNYSRDCIDPKAKVSTCFNDLFLMCPSDYQEPEIGSSSSSSSSSSSSGSSSNSTSSSTSSTSSTSSESSESSNGSNSNSVSSESSSPSSSSVESSSNSKSNHTSSESSSSDDDLGNPSSSSILSVSKLIILLISIILYCF.

The signal sequence occupies residues methionine 1–serine 21. Residues isoleucine 349–serine 434 are disordered. Residues serine 351–serine 423 are compositionally biased toward low complexity. Serine 433 is lipidated: GPI-like-anchor amidated serine. Positions serine 434 to phenylalanine 455 are cleaved as a propeptide — removed in mature form.

The protein localises to the cell membrane. Its function is as follows. Plays a role in differentiation. The protein is Differentiation-associated protein 1 (dia1) of Dictyostelium discoideum (Social amoeba).